The primary structure comprises 425 residues: Cyclin-K (425 aa).

The segment at G262–L425 is disordered. Residues A366 to A377 are compositionally biased toward low complexity. The span at G379–T399 shows a compositional bias: pro residues.

It belongs to the cyclin family.

It localises to the nucleus. Its function is as follows. Regulatory subunit of cyclin-dependent kinases that mediates activation of target kinases. Plays a role in transcriptional regulation via its role in regulating the phosphorylation of the C-terminal domain (CTD) of the large subunit of RNA polymerase II (POLR2A). In Danio rerio (Zebrafish), this protein is Cyclin-K (ccnk).